Here is a 300-residue protein sequence, read N- to C-terminus: Junctional adhesion molecule A (300 aa).

A signal peptide spans 1 to 26 (MGTEGKAGSKLLFLFTSMILGSLVQG). The Extracellular portion of the chain corresponds to 27 to 238 (KGSVYSPQTA…MEAVELNVGG (212 aa)). Ig-like V-type domains follow at residues 28–122 (GSVY…GEVS) and 134–228 (PTVS…EAVR). 2 cysteine pairs are disulfide-bonded: Cys49-Cys108 and Cys152-Cys212. A glycan (N-linked (GlcNAc...) asparagine) is linked at Asn185. The helical transmembrane segment at 239–259 (IVAAVLVTLILLGLLIFGIWF) threads the bilayer. Topologically, residues 260–300 (AYSRGYFERTKKGTAPGKKVIYSQPSARSEGEFKQTSSFLV) are cytoplasmic. A phosphoserine mark is found at Ser282, Ser285, and Ser288.

It belongs to the immunoglobulin superfamily. As to quaternary structure, interacts with the ninth PDZ domain of MPDZ. Interacts with the first PDZ domain of PARD3. The association between PARD3 and PARD6B probably disrupts this interaction. Interacts with ITGAL (via I-domain). Interacts with CD151. In terms of processing, N-glycosylated.

The protein localises to the cell junction. It localises to the tight junction. It is found in the cell membrane. Its function is as follows. Seems to play a role in epithelial tight junction formation. Appears early in primordial forms of cell junctions and recruits PARD3. The association of the PARD6-PARD3 complex may prevent the interaction of PARD3 with JAM1, thereby preventing tight junction assembly. Plays a role in regulating monocyte transmigration involved in integrity of epithelial barrier. Ligand for integrin alpha-L/beta-2 involved in memory T-cell and neutrophil transmigration. This is Junctional adhesion molecule A (F11r) from Rattus norvegicus (Rat).